Here is a 181-residue protein sequence, read N- to C-terminus: Peptide deformylase (181 aa).

The Fe cation site is built by C103 and H145. E146 is a catalytic residue. A Fe cation-binding site is contributed by H149.

This sequence belongs to the polypeptide deformylase family. Requires Fe(2+) as cofactor.

The catalysed reaction is N-terminal N-formyl-L-methionyl-[peptide] + H2O = N-terminal L-methionyl-[peptide] + formate. In terms of biological role, removes the formyl group from the N-terminal Met of newly synthesized proteins. Requires at least a dipeptide for an efficient rate of reaction. N-terminal L-methionine is a prerequisite for activity but the enzyme has broad specificity at other positions. This Orientia tsutsugamushi (strain Ikeda) (Rickettsia tsutsugamushi) protein is Peptide deformylase.